We begin with the raw amino-acid sequence, 255 residues long: Imidazole glycerol phosphate synthase subunit HisF (255 aa).

Catalysis depends on residues aspartate 12 and aspartate 131.

The protein belongs to the HisA/HisF family. As to quaternary structure, heterodimer of HisH and HisF.

It localises to the cytoplasm. It carries out the reaction 5-[(5-phospho-1-deoxy-D-ribulos-1-ylimino)methylamino]-1-(5-phospho-beta-D-ribosyl)imidazole-4-carboxamide + L-glutamine = D-erythro-1-(imidazol-4-yl)glycerol 3-phosphate + 5-amino-1-(5-phospho-beta-D-ribosyl)imidazole-4-carboxamide + L-glutamate + H(+). It participates in amino-acid biosynthesis; L-histidine biosynthesis; L-histidine from 5-phospho-alpha-D-ribose 1-diphosphate: step 5/9. IGPS catalyzes the conversion of PRFAR and glutamine to IGP, AICAR and glutamate. The HisF subunit catalyzes the cyclization activity that produces IGP and AICAR from PRFAR using the ammonia provided by the HisH subunit. The polypeptide is Imidazole glycerol phosphate synthase subunit HisF (Neisseria meningitidis serogroup C / serotype 2a (strain ATCC 700532 / DSM 15464 / FAM18)).